The primary structure comprises 345 residues: Golgi-associated RAB2 interactor protein 1B (345 aa).

2 disordered regions span residues 222–241 (CSPS…SQPS) and 271–299 (SRSS…PCTR). The segment covering 275 to 285 (KKTENKKDSSG) has biased composition (basic and acidic residues).

The protein belongs to the GARIN family.

It localises to the golgi apparatus. Functionally, RAB2B effector protein required for accurate acrosome formation and normal male fertility. In complex with RAB2A/RAB2B, seems to suppress excessive vesicle trafficking during acrosome formation. The sequence is that of Golgi-associated RAB2 interactor protein 1B (GARIN1B) from Bos taurus (Bovine).